We begin with the raw amino-acid sequence, 398 residues long: Acetyl-CoA acetyltransferase erg10B, cytosolic (398 aa).

Residue C92 is the Acyl-thioester intermediate of the active site. Y187 is a binding site for K(+). 2 residues coordinate CoA: N229 and K232. Residues A249, P250, and S252 each coordinate K(+). S253 lines the CoA pocket. V350 contacts K(+). Residues H354 and C384 each act as proton acceptor in the active site. N385 is a chloride binding site.

Belongs to the thiolase-like superfamily. Thiolase family. As to quaternary structure, homotetramer. The cofactor is K(+).

Its subcellular location is the cytoplasm. The protein resides in the cytosol. The catalysed reaction is 2 acetyl-CoA = acetoacetyl-CoA + CoA. It participates in metabolic intermediate biosynthesis; (R)-mevalonate biosynthesis; (R)-mevalonate from acetyl-CoA: step 1/3. Its activity is regulated as follows. Activity is increased by monovalent cations such as K(+), Rb(+) or Cs(+). In terms of biological role, acetyl-CoA acetyltransferase; part of the first module of ergosterol biosynthesis pathway that includes the early steps of the pathway, conserved across all eukaryotes, and which results in the formation of mevalonate from acetyl-coenzyme A (acetyl-CoA). In this module, the cytosolic acetyl-CoA acetyltransferase erg10B catalyzes the formation of acetoacetyl-CoA. The hydroxymethylglutaryl-CoA synthases AFUA_8G07210 and AFUA_3G10660 then condense acetyl-CoA with acetoacetyl-CoA to form HMG-CoA. The rate-limiting step of the early module is the reduction to mevalonate by the 3-hydroxy-3-methylglutaryl-coenzyme A (HMG-CoA) reductases hmg1 and hmg2. Mevalonate is also a precursor for the extracellular siderophore triacetylfusarinine C (TAFC). The sequence is that of Acetyl-CoA acetyltransferase erg10B, cytosolic from Aspergillus fumigatus (strain CBS 144.89 / FGSC A1163 / CEA10) (Neosartorya fumigata).